We begin with the raw amino-acid sequence, 731 residues long: Bifunctional trehalose-6-phosphate synthase/phosphatase (731 aa).

Residues 1 to 464 form an alpha,alpha-trehalose-phosphate synthase region; the sequence is MRLIVVSNRL…WGTDFIYSLI (464 aa). A D-glucose 6-phosphate-binding site is contributed by Arg9. UDP-alpha-D-glucose is bound at residue 25–26; it reads GG. The D-glucose 6-phosphate site is built by Tyr89 and Asp143. UDP-alpha-D-glucose-binding residues include Arg276 and Lys281. D-glucose 6-phosphate is bound at residue Arg314. 379–383 contacts UDP-alpha-D-glucose; sequence LVAKE. A trehalose-6-phosphate phosphatase region spans residues 465 to 731; that stretch reads SAKSAREEVE…RSLLEQLRPP (267 aa). Asp503 acts as the Nucleophile in catalysis. Asp503, Asp505, and Asp684 together coordinate Mg(2+). 503–505 is a binding site for alpha,alpha-trehalose 6-phosphate; the sequence is DYD.

It in the N-terminal section; belongs to the glycosyltransferase 20 family. In the C-terminal section; belongs to the trehalose phosphatase family. May interact with the putative glycosyltransferase (GT) TTX_1305. TTX_1305 is required for the trehalose-6-phosphate synthase activity of tpsp. It depends on Mg(2+) as a cofactor.

The enzyme catalyses D-glucose 6-phosphate + UDP-alpha-D-glucose = alpha,alpha-trehalose 6-phosphate + UDP + H(+). It carries out the reaction alpha,alpha-trehalose 6-phosphate + H2O = alpha,alpha-trehalose + phosphate. It functions in the pathway glycan biosynthesis; trehalose biosynthesis. Its function is as follows. Bifunctional enzyme which catalyzes the transfer of glucose from UDP-alpha-D-glucose to glucose-6-phosphate to form trehalose-6-phosphate (Tre6P) and removes the phosphate from Tre6P to produce free trehalose. The sequence is that of Bifunctional trehalose-6-phosphate synthase/phosphatase from Thermoproteus tenax (strain ATCC 35583 / DSM 2078 / JCM 9277 / NBRC 100435 / Kra 1).